Here is a 57-residue protein sequence, read N- to C-terminus: Large ribosomal subunit protein bL32 (57 aa).

The protein belongs to the bacterial ribosomal protein bL32 family.

The polypeptide is Large ribosomal subunit protein bL32 (Bacillus pumilus (strain SAFR-032)).